A 154-amino-acid chain; its full sequence is Protein ripply (154 aa).

A WRPW motif motif is present at residues 38–41 (WRPW). 2 disordered regions span residues 54 to 86 (IRER…FQHP) and 121 to 154 (EDPA…PILN). Residues 85 to 119 (HPVKLHWSKPVYDYMYQYGKQLLDAFPVQATICIV) are ripply homology domain. Residues 121–140 (EDPAQSDDSDFESDYEDDSD) show a composition bias toward acidic residues.

The protein belongs to the ripply family. In the late gastrula stage, expression appears in the dorsal presomitic mesoderm and in the first three pairs of nascent somites. Expressed strongly in forming somites and then expression is rapidly down-regulated except in the first somite pair where expression is maintained for a longer period. Also expressed in the presumptive notochord and in the tail bud at the 48 hour larval stage. Expression disappears by the 72 hour stage.

It localises to the nucleus. May play a role in somitogenesis. This chain is Protein ripply, found in Branchiostoma belcheri (Amphioxus).